We begin with the raw amino-acid sequence, 430 residues long: MTRSEALFEQAKKTIPGGVNSPVRAFNGVGGSPLFIEKADGAYIYDADGKAYIDYVGSWGPMILGHNHPKIREAVLAAVHNGLSFGAPTELEVQMAEKVIAMVPSIEQVRMVSSGTEATMSAIRLARGFTNRDKILKFEGCYHGHADCLLVKAGSGALTLGQPSSPGIPEDFAKHTLTAVYNDLDSVRSLFEQYPTEISCIIIEPVAGNMNCIPPIPGFLEGLRAMCDEFGALLIIDEVMTGFRVSRSGAQGHYGVTPDLTTLGKVIGGGMPVGAFGGRKEVMQFIAPTGPVYQAGTLSGNPIAMSAGLAQMEALCEEGLYEALSAKTKRIAEGFKAAADKHGIPMAINYVGGMFGFFFTEQEQITRFDQVTKCNIEHFRTFYHGMLDEGVYLAPSAYEAGFLSMAHGEEELRLTLEAADRVLGRMKAAM.

The residue at position 265 (Lys265) is an N6-(pyridoxal phosphate)lysine.

Belongs to the class-III pyridoxal-phosphate-dependent aminotransferase family. HemL subfamily. As to quaternary structure, homodimer. Requires pyridoxal 5'-phosphate as cofactor.

The protein localises to the cytoplasm. The enzyme catalyses (S)-4-amino-5-oxopentanoate = 5-aminolevulinate. It participates in porphyrin-containing compound metabolism; protoporphyrin-IX biosynthesis; 5-aminolevulinate from L-glutamyl-tRNA(Glu): step 2/2. The sequence is that of Glutamate-1-semialdehyde 2,1-aminomutase from Shewanella sp. (strain ANA-3).